We begin with the raw amino-acid sequence, 349 residues long: DNA replication and repair protein RecF (349 aa).

30–37 is a binding site for ATP; the sequence is GKNGSGKT.

The protein belongs to the RecF family.

The protein resides in the cytoplasm. In terms of biological role, the RecF protein is involved in DNA metabolism; it is required for DNA replication and normal SOS inducibility. RecF binds preferentially to single-stranded, linear DNA. It also seems to bind ATP. This chain is DNA replication and repair protein RecF, found in Francisella tularensis subsp. tularensis (strain FSC 198).